The chain runs to 367 residues: C-X-C chemokine receptor type 3 (367 aa).

The Extracellular segment spans residues 1–56; it reads MYLEVSERQVLDASDIAFLLENSTSPYDYGENESDFSDSPPCPQDFSLNFDRTFLP. An N-linked (GlcNAc...) asparagine glycan is attached at Asn22. A sulfotyrosine mark is found at Tyr27 and Tyr29. N-linked (GlcNAc...) asparagine glycosylation occurs at Asn32. Residues 57-77 form a helical membrane-spanning segment; it reads VLYSLLFLLGLLGNGAVAAVL. Residues 78-89 are Cytoplasmic-facing; the sequence is LSQRTALSSTDT. Residues 90–110 traverse the membrane as a helical segment; the sequence is FLLHLAVADVLLVLTLPLWAV. Over 111 to 125 the chain is Extracellular; that stretch reads DAAAQWVFGSGLCKV. Residues Cys123 and Cys202 are joined by a disulfide bond. Residues 126–146 traverse the membrane as a helical segment; sequence AGALFNINFYAGAFLLACISF. Residues 147 to 168 lie on the Cytoplasmic side of the membrane; the sequence is DRYLSIVHATQIYRRDPWVRVA. Residues 169-189 traverse the membrane as a helical segment; the sequence is LTCIVVWGLCVLFALPDFIFL. At 190 to 222 the chain is on the extracellular side; it reads SASHDQRLNATHCQYNFPQVGRTALRVLQLVAG. N-linked (GlcNAc...) asparagine glycosylation is present at Asn198. The helical transmembrane segment at 223 to 243 threads the bilayer; sequence FLMPLLVMAYCYAHILAVLLV. Residues 244-255 lie on the Cytoplasmic side of the membrane; that stretch reads SRGQRRFRAMRL. A helical transmembrane segment spans residues 256–276; it reads VVVVVVAFAVCWTPYHLVVLV. The Extracellular segment spans residues 277 to 300; the sequence is DILMDVGVLARNCGRESHVDVAKS. The helical transmembrane segment at 301 to 321 threads the bilayer; that stretch reads VTSGMGYMHCCLNPLLYAFVG. The Cytoplasmic portion of the chain corresponds to 322–367; sequence VKFKEQMWMLLMRLGRSDQRGPQRQPSSSRRESSWSETTEASYLGL. Positions 339–367 are disordered; it reads DQRGPQRQPSSSRRESSWSETTEASYLGL.

Belongs to the G-protein coupled receptor 1 family. In terms of assembly, homomer. Forms heteromers with ACKR4. Interacts with PF4/CXCL4. In terms of processing, sulfation on Tyr-27 and Tyr-29 is essential for CXCL10 binding. Post-translationally, N-glycosylated.

The protein localises to the cell membrane. Functionally, receptor for the C-X-C chemokine CXCL9, CXCL10 and CXCL11 and mediates the proliferation, survival and angiogenic activity of mesangial cells through a heterotrimeric G-protein signaling pathway. Probably promotes cell chemotaxis response. Binds to CCL21. Upon activation by PF4, induces activated T-lymphocytes migration mediated via downstream Ras/extracellular signal-regulated kinase (ERK) signaling. This is C-X-C chemokine receptor type 3 (Cxcr3) from Rattus norvegicus (Rat).